Reading from the N-terminus, the 327-residue chain is Gonadotropin-releasing hormone receptor (327 aa).

Over 1-38 (MANNASLEQDQNHCSAINNSIPLTQGKLPTLTLSGKIR) the chain is Extracellular. N-linked (GlcNAc...) asparagine glycans are attached at residues Asn4 and Asn18. Residues 39-58 (VTVTFFLFLLSTAFNASFLV) traverse the membrane as a helical segment. Topologically, residues 59–77 (KLQRWTQKRKKGKKLSRMK) are cytoplasmic. The helical transmembrane segment at 78–97 (VLLKHLTLANLLETLIVMPL) threads the bilayer. At 98–115 (DGMWNITVQWYAGEFLCK) the chain is on the extracellular side. Asn102 carries an N-linked (GlcNAc...) asparagine glycan. Residues Cys114 and Cys195 are joined by a disulfide bond. Residues 116-137 (VLSYLKLFSMYAPAFMMVVISL) traverse the membrane as a helical segment. Topologically, residues 138 to 164 (DRSLAVTQPLAVQSKSKLERSMTSLAW) are cytoplasmic. The chain crosses the membrane as a helical span at residues 165–184 (ILSIVFAGPQLYIFRMIYLA). Residues 185–211 (DGSGPAVFSQCVTHCSFPQWWHEAFYN) lie on the Extracellular side of the membrane. The helical transmembrane segment at 212-231 (FFTFSCLFIIPLLIMLICNA) threads the bilayer. Residues 232–280 (KIIFALTRVLHQDPRKLQLNQSKNNIPRARLRTLKMTVAFGTSFVICWT) are Cytoplasmic-facing. The chain crosses the membrane as a helical span at residues 281–299 (PYYVLGIWYWFDPEMLNRV). Topologically, residues 300 to 305 (SEPVNH) are extracellular. Residues 306-325 (FFFLFAFLNPCFDPLIYGYF) form a helical membrane-spanning segment. Residues 326-327 (SL) are Cytoplasmic-facing.

The protein belongs to the G-protein coupled receptor 1 family.

The protein localises to the cell membrane. In terms of biological role, receptor for gonadotropin releasing hormone (GnRH) that mediates the action of GnRH to stimulate the secretion of the gonadotropic hormones luteinizing hormone (LH) and follicle-stimulating hormone (FSH). This receptor mediates its action by association with G-proteins that activate a phosphatidylinositol-calcium second messenger system. In Rattus norvegicus (Rat), this protein is Gonadotropin-releasing hormone receptor (Gnrhr).